The primary structure comprises 432 residues: GTPase HflX (432 aa).

The 166-residue stretch at 202-367 (FTVALVGYTN…ELRRAVGRAM (166 aa)) folds into the Hflx-type G domain. GTP contacts are provided by residues 208 to 215 (GYTNAGKS), 233 to 237 (FATLD), 255 to 258 (DTVG), 321 to 324 (NKID), and 345 to 347 (SAQ). Mg(2+)-binding residues include Ser-215 and Thr-235.

Belongs to the TRAFAC class OBG-HflX-like GTPase superfamily. HflX GTPase family. Monomer. Associates with the 50S ribosomal subunit. Mg(2+) is required as a cofactor.

The protein resides in the cytoplasm. In terms of biological role, GTPase that associates with the 50S ribosomal subunit and may have a role during protein synthesis or ribosome biogenesis. The sequence is that of GTPase HflX from Magnetococcus marinus (strain ATCC BAA-1437 / JCM 17883 / MC-1).